Reading from the N-terminus, the 196-residue chain is Putative manganese efflux pump MntP (196 aa).

Transmembrane regions (helical) follow at residues 3 to 23 (PASLILLAFAMSTDAFAASIG), 39 to 59 (IGAVFGVVEAIMPLLGWALGH), 67 to 87 (GVDHWIAFVMLALLGGHMIWA), 109 to 129 (IWLIAFTALATSIDAMAVGIT), 137 to 157 (IIAASVAIGLATALMVTLGTL), and 172 to 192 (ILGGLILIGIGIAVLYEHLAG).

Belongs to the MntP (TC 9.B.29) family.

The protein resides in the cell inner membrane. Probably functions as a manganese efflux pump. This is Putative manganese efflux pump MntP from Chromohalobacter salexigens (strain ATCC BAA-138 / DSM 3043 / CIP 106854 / NCIMB 13768 / 1H11).